Consider the following 151-residue polypeptide: Large ribosomal subunit protein bL17 (151 aa).

Residues 118 to 151 (EAKQPPRKEKAKKPAPVQAEEASATPASEEKAQD) form a disordered region. The span at 131–144 (PAPVQAEEASATPA) shows a compositional bias: low complexity.

This sequence belongs to the bacterial ribosomal protein bL17 family. Part of the 50S ribosomal subunit. Contacts protein L32.

The polypeptide is Large ribosomal subunit protein bL17 (Syntrophobacter fumaroxidans (strain DSM 10017 / MPOB)).